The primary structure comprises 58 residues: Small ribosomal subunit protein bS21 (58 aa).

The interval 28–58 (VLQDIRKHEHYEKPSIKKKKKSEAARKKKRF) is disordered. Residues 31 to 42 (DIRKHEHYEKPS) show a composition bias toward basic and acidic residues. Basic residues predominate over residues 43–58 (IKKKKKSEAARKKKRF).

Belongs to the bacterial ribosomal protein bS21 family.

This chain is Small ribosomal subunit protein bS21, found in Syntrophomonas wolfei subsp. wolfei (strain DSM 2245B / Goettingen).